The following is a 439-amino-acid chain: GTPase Der (439 aa).

2 EngA-type G domains span residues 4-169 and 177-352; these read AMVA…PEND and IKIA…EEYN. Residues 10 to 17, 57 to 61, 120 to 123, 183 to 190, 230 to 234, and 295 to 298 each bind GTP; these read GRPNVGKS, DTGGL, NKVD, DTAGI, and NKWD. In terms of domain architecture, KH-like spans 353-437; that stretch reads KRITTGLLNN…PIVISTKKRG (85 aa).

The protein belongs to the TRAFAC class TrmE-Era-EngA-EngB-Septin-like GTPase superfamily. EngA (Der) GTPase family. In terms of assembly, associates with the 50S ribosomal subunit.

Functionally, GTPase that plays an essential role in the late steps of ribosome biogenesis. This chain is GTPase Der, found in Caldanaerobacter subterraneus subsp. tengcongensis (strain DSM 15242 / JCM 11007 / NBRC 100824 / MB4) (Thermoanaerobacter tengcongensis).